The chain runs to 391 residues: Phosphoglycerate kinase (391 aa).

Substrate is bound by residues Asp-21–Asn-23, Arg-36, His-59–Arg-62, Arg-113, and Arg-146. ATP is bound by residues Lys-197, Glu-319, and Gly-345–Thr-348.

Belongs to the phosphoglycerate kinase family. As to quaternary structure, monomer.

The protein localises to the cytoplasm. The enzyme catalyses (2R)-3-phosphoglycerate + ATP = (2R)-3-phospho-glyceroyl phosphate + ADP. Its pathway is carbohydrate degradation; glycolysis; pyruvate from D-glyceraldehyde 3-phosphate: step 2/5. The polypeptide is Phosphoglycerate kinase (Xylella fastidiosa (strain Temecula1 / ATCC 700964)).